A 438-amino-acid polypeptide reads, in one-letter code: Chromosomal replication initiator protein DnaA (438 aa).

The domain I, interacts with DnaA modulators stretch occupies residues 1–74 (MNEINKIWQK…SFYQITGSQV (74 aa)). The tract at residues 74-100 (VEVKYIITGKEHETGLIEEKKQVIKKG) is domain II. The domain III, AAA+ region stretch occupies residues 101–317 (NLNPKYTFDT…GSLIKLCAYT (217 aa)). Residues G145, G147, K148, and T149 each coordinate ATP. The segment at 318–438 (SLTKVPISMD…DSIIKKVTGQ (121 aa)) is domain IV, binds dsDNA.

Belongs to the DnaA family. As to quaternary structure, oligomerizes as a right-handed, spiral filament on DNA at oriC.

It is found in the cytoplasm. In terms of biological role, plays an essential role in the initiation and regulation of chromosomal replication. ATP-DnaA binds to the origin of replication (oriC) to initiate formation of the DNA replication initiation complex once per cell cycle. Binds the DnaA box (a 9 base pair repeat at the origin) and separates the double-stranded (ds)DNA. Forms a right-handed helical filament on oriC DNA; dsDNA binds to the exterior of the filament while single-stranded (ss)DNA is stabiized in the filament's interior. The ATP-DnaA-oriC complex binds and stabilizes one strand of the AT-rich DNA unwinding element (DUE), permitting loading of DNA polymerase. After initiation quickly degrades to an ADP-DnaA complex that is not apt for DNA replication. Binds acidic phospholipids. The sequence is that of Chromosomal replication initiator protein DnaA from Thermodesulfovibrio yellowstonii (strain ATCC 51303 / DSM 11347 / YP87).